The primary structure comprises 272 residues: Probable ribosomal RNA small subunit methyltransferase A (272 aa).

S-adenosyl-L-methionine is bound by residues Asn-23, Leu-25, Gly-50, Glu-71, Asp-95, and Asn-110.

This sequence belongs to the class I-like SAM-binding methyltransferase superfamily. rRNA adenine N(6)-methyltransferase family. RsmA subfamily.

Its subcellular location is the cytoplasm. Specifically dimethylates two adjacent adenosines in the loop of a conserved hairpin near the 3'-end of 16S rRNA in the 30S particle. May play a critical role in biogenesis of 30S subunits. The sequence is that of Probable ribosomal RNA small subunit methyltransferase A from Thermococcus onnurineus (strain NA1).